A 263-amino-acid polypeptide reads, in one-letter code: HLA class II histocompatibility antigen, DM beta chain (263 aa).

Residues 1-18 (MITFLPLLLGLSLGCTGA) form the signal peptide. The interval 19–112 (GGFVAHVEST…PFWGSLTNRT (94 aa)) is beta-1. The Lumenal segment spans residues 19-218 (GGFVAHVEST…PGLSPMQTLK (200 aa)). Disulfide bonds link Cys29/Cys97 and Cys43/Cys53. An N-linked (GlcNAc...) asparagine glycan is attached at Asn110. The segment at 113–207 (RPPSVQVAKT…GAPEPILRDW (95 aa)) is beta-2. The 95-residue stretch at 114-208 (PPSVQVAKTT…APEPILRDWT (95 aa)) folds into the Ig-like C1-type domain. A disulfide bond links Cys135 and Cys192. The tract at residues 208–218 (TPGLSPMQTLK) is connecting peptide. Residues 219-239 (VSVSAVTLGLGLIIFSLGVIS) form a helical membrane-spanning segment. Residues 240 to 263 (WRRAGHSSYTPLPGSNYSEGWHIS) lie on the Cytoplasmic side of the membrane. Positions 248–251 (YTPL) match the YXXZ motif motif.

Belongs to the MHC class II family. In terms of assembly, heterodimer of an alpha chain (DMA) and a beta chain (DMB). Interacts with MHCII; this interaction mediates rapid selection of high-affinity peptides in a pH-dependent manner, with an optimum at pH 5.5.

The protein localises to the late endosome membrane. It is found in the lysosome membrane. Its function is as follows. Plays a critical role in catalyzing the release of class II-associated invariant chain peptide (CLIP) from newly synthesized MHC class II molecules and freeing the peptide binding site for acquisition of antigenic peptides. In B-cells, the interaction between HLA-DM and MHC class II molecules is regulated by HLA-DO. In Homo sapiens (Human), this protein is HLA class II histocompatibility antigen, DM beta chain (HLA-DMB).